A 185-amino-acid chain; its full sequence is Ribosome-recycling factor (185 aa).

It belongs to the RRF family.

Its subcellular location is the cytoplasm. Responsible for the release of ribosomes from messenger RNA at the termination of protein biosynthesis. May increase the efficiency of translation by recycling ribosomes from one round of translation to another. This chain is Ribosome-recycling factor, found in Thermomicrobium roseum (strain ATCC 27502 / DSM 5159 / P-2).